The chain runs to 298 residues: HTH-type transcriptional regulator ArgP (298 aa).

One can recognise an HTH lysR-type domain in the interval 4–60 (LDYRWIEALDSVVSKGSFERAAEQLFISQSAVSQRIKQLEKYLAQPVLIREQPPRPT). A DNA-binding region (H-T-H motif) is located at residues 21–40 (FERAAEQLFISQSAVSQRIK).

It belongs to the LysR transcriptional regulatory family. As to quaternary structure, homodimer.

Its function is as follows. Controls the transcription of genes involved in arginine and lysine metabolism. The chain is HTH-type transcriptional regulator ArgP from Vibrio cholerae serotype O1 (strain ATCC 39541 / Classical Ogawa 395 / O395).